We begin with the raw amino-acid sequence, 655 residues long: Chaperone protein DnaK 3 (655 aa).

At Thr-197 the chain carries Phosphothreonine; by autocatalysis.

It belongs to the heat shock protein 70 family.

Functionally, acts as a chaperone. The chain is Chaperone protein DnaK 3 from Synechococcus sp. (strain ATCC 27144 / PCC 6301 / SAUG 1402/1) (Anacystis nidulans).